A 272-amino-acid chain; its full sequence is Diaminopimelate epimerase (272 aa).

Substrate contacts are provided by Asn11 and Asn63. The active-site Proton donor is Cys72. Substrate-binding positions include 73 to 74 (GN), Asn190, and 208 to 209 (ER). Residue Cys217 is the Proton acceptor of the active site. 218 to 219 (GT) contributes to the substrate binding site.

This sequence belongs to the diaminopimelate epimerase family. As to quaternary structure, homodimer.

It localises to the cytoplasm. It catalyses the reaction (2S,6S)-2,6-diaminopimelate = meso-2,6-diaminopimelate. It participates in amino-acid biosynthesis; L-lysine biosynthesis via DAP pathway; DL-2,6-diaminopimelate from LL-2,6-diaminopimelate: step 1/1. Functionally, catalyzes the stereoinversion of LL-2,6-diaminopimelate (L,L-DAP) to meso-diaminopimelate (meso-DAP), a precursor of L-lysine and an essential component of the bacterial peptidoglycan. This chain is Diaminopimelate epimerase, found in Clostridium perfringens (strain 13 / Type A).